Here is a 240-residue protein sequence, read N- to C-terminus: Methylthioribulose-1-phosphate dehydratase (240 aa).

Residue Cys100 coordinates substrate. Positions 117 and 119 each coordinate Zn(2+). Glu146 (proton donor/acceptor) is an active-site residue. A Zn(2+)-binding site is contributed by His202.

Belongs to the aldolase class II family. MtnB subfamily. Zn(2+) serves as cofactor.

The protein resides in the cytoplasm. It carries out the reaction 5-(methylsulfanyl)-D-ribulose 1-phosphate = 5-methylsulfanyl-2,3-dioxopentyl phosphate + H2O. It participates in amino-acid biosynthesis; L-methionine biosynthesis via salvage pathway; L-methionine from S-methyl-5-thio-alpha-D-ribose 1-phosphate: step 2/6. In terms of biological role, catalyzes the dehydration of methylthioribulose-1-phosphate (MTRu-1-P) into 2,3-diketo-5-methylthiopentyl-1-phosphate (DK-MTP-1-P). The chain is Methylthioribulose-1-phosphate dehydratase from Emericella nidulans (strain FGSC A4 / ATCC 38163 / CBS 112.46 / NRRL 194 / M139) (Aspergillus nidulans).